A 2206-amino-acid polypeptide reads, in one-letter code: Genome polyprotein (2206 aa).

Glycine 2 carries N-myristoyl glycine; by host lipidation. Residues glycine 2–glutamine 1517 are Cytoplasmic-facing. 2 amphipathic alpha-helix regions span residues glycine 579–glutamine 599 and glycine 579–leucine 603. Active-site for protease 2A activity residues include histidine 898 and aspartate 916. The Zn(2+) site is built by cysteine 933 and cysteine 935. Catalysis depends on cysteine 987, which acts as the For protease 2A activity. Residues cysteine 993 and histidine 995 each contribute to the Zn(2+) site. The membrane-binding stretch occupies residues glycine 1125–glutamine 1197. Residues glycine 1125–threonine 1263 are oligomerization. The interval serine 1146–serine 1150 is RNA-binding. The region spanning glutamate 1229–asparagine 1385 is the SF3 helicase domain. Glycine 1253 to serine 1260 lines the ATP pocket. Residues cysteine 1393, cysteine 1396, cysteine 1405, and cysteine 1410 each contribute to the Zn(2+) site. The C4-type zinc-finger motif lies at cysteine 1393 to cysteine 1410. An RNA-binding region spans residues glutamate 1437–isoleucine 1444. Residues methionine 1448–glutamine 1453 are oligomerization. The stretch at alanine 1518 to tyrosine 1533 is an intramembrane region. Topologically, residues lysine 1534–phenylalanine 2206 are cytoplasmic. Tyrosine 1543 carries the O-(5'-phospho-RNA)-tyrosine modification. The Peptidase C3 domain maps to glycine 1563–phenylalanine 1741. Active-site for protease 3C activity residues include histidine 1602, glutamate 1633, and cysteine 1709. The 116-residue stretch at glutamate 1972–leucine 2087 folds into the RdRp catalytic domain. Mg(2+) contacts are provided by aspartate 1978 and aspartate 2073.

It belongs to the picornaviruses polyprotein family. As to quaternary structure, interacts with capsid protein VP1 and capsid protein VP3 to form heterotrimeric protomers. In terms of assembly, interacts with capsid protein VP0, and capsid protein VP3 to form heterotrimeric protomers. Interacts with human PVR. Five protomers subsequently associate to form pentamers which serve as building blocks for the capsid. Interacts with capsid protein VP2, capsid protein VP3 and capsid protein VP4 following cleavage of capsid protein VP0. Interacts with capsid protein VP1 and capsid protein VP3 in the mature capsid. As to quaternary structure, interacts with capsid protein VP0 and capsid protein VP1 to form heterotrimeric protomers. Five protomers subsequently associate to form pentamers which serve as building blocks for the capsid. Interacts with capsid protein VP4 in the mature capsid. Interacts with protein 2C; this interaction may be important for virion morphogenesis. In terms of assembly, interacts with capsid protein VP1 and capsid protein VP3. Homodimer. As to quaternary structure, homohexamer; forms a hexameric ring structure with 6-fold symmetry characteristic of AAA+ ATPases. Interacts (via N-terminus) with host RTN3 (via reticulon domain); this interaction is important for viral replication. Interacts with capsid protein VP3; this interaction may be important for virion morphogenesis. In terms of assembly, interacts with protein 3CD. Homodimer. Interacts with host GBF1. Interacts (via GOLD domain) with host ACBD3 (via GOLD domain); this interaction allows the formation of a viral protein 3A/ACBD3 heterotetramer with a 2:2 stoichiometry, which will stimulate the recruitment of host PI4KB in order to synthesize PI4P at the viral RNA replication sites. As to quaternary structure, interacts with RNA-directed RNA polymerase. In terms of assembly, interacts with protein 3AB and with RNA-directed RNA polymerase. Interacts with Viral protein genome-linked and with protein 3CD. Mg(2+) serves as cofactor. In terms of processing, specific enzymatic cleavages in vivo by the viral proteases yield processing intermediates and the mature proteins. Myristoylation is required for the formation of pentamers during virus assembly. Further assembly of 12 pentamers and a molecule of genomic RNA generates the provirion. Post-translationally, during virion maturation, immature virions are rendered infectious following cleavage of VP0 into VP4 and VP2. This maturation seems to be an autocatalytic event triggered by the presence of RNA in the capsid and it is followed by a conformational change infectious virion. In terms of processing, myristoylation is required during RNA encapsidation and formation of the mature virus particle. VPg is uridylylated by the polymerase into VPg-pUpU. This acts as a nucleotide-peptide primer for the genomic RNA replication.

Its subcellular location is the virion. The protein localises to the host cytoplasm. It localises to the host cytoplasmic vesicle membrane. The protein resides in the host nucleus. It carries out the reaction a ribonucleoside 5'-triphosphate + H2O = a ribonucleoside 5'-diphosphate + phosphate + H(+). The catalysed reaction is Selective cleavage of Tyr-|-Gly bond in the picornavirus polyprotein.. The enzyme catalyses RNA(n) + a ribonucleoside 5'-triphosphate = RNA(n+1) + diphosphate. It catalyses the reaction Selective cleavage of Gln-|-Gly bond in the poliovirus polyprotein. In other picornavirus reactions Glu may be substituted for Gln, and Ser or Thr for Gly.. Replication or transcription is subject to high level of random mutations by the nucleotide analog ribavirin. In terms of biological role, forms an icosahedral capsid of pseudo T=3 symmetry with capsid proteins VP2 and VP3. The capsid is 300 Angstroms in diameter, composed of 60 copies of each capsid protein and enclosing the viral positive strand RNA genome. Capsid protein VP1 mainly forms the vertices of the capsid. Capsid protein VP1 interacts with host cell receptor PVR to provide virion attachment to target host cells. This attachment induces virion internalization predominantly through clathrin- and caveolin-independent endocytosis in Hela cells and through caveolin-mediated endocytosis in brain microvascular endothelial cells. Tyrosine kinases are probably involved in the entry process. Virus binding to PVR induces increased junctional permeability and rearrangement of junctional proteins. Modulation of endothelial tight junctions, as well as cytolytic infection of endothelial cells themselves, may result in loss of endothelial integrity which may help the virus to reach the CNS. After binding to its receptor, the capsid undergoes conformational changes. Capsid protein VP1 N-terminus (that contains an amphipathic alpha-helix) and capsid protein VP4 are externalized. Together, they shape a pore in the host membrane through which viral genome is translocated to host cell cytoplasm. Its function is as follows. Forms an icosahedral capsid of pseudo T=3 symmetry with capsid proteins VP2 and VP3. The capsid is 300 Angstroms in diameter, composed of 60 copies of each capsid protein and enclosing the viral positive strand RNA genome. Lies on the inner surface of the capsid shell. After binding to the host receptor, the capsid undergoes conformational changes. Capsid protein VP4 is released, Capsid protein VP1 N-terminus is externalized, and together, they shape a pore in the host membrane through which the viral genome is translocated into the host cell cytoplasm. Functionally, component of immature procapsids, which is cleaved into capsid proteins VP4 and VP2 after maturation. Allows the capsid to remain inactive before the maturation step. In terms of biological role, cysteine protease that cleaves viral polyprotein and specific host proteins. It is responsible for the autocatalytic cleavage between the P1 and P2 regions, which is the first cleavage occurring in the polyprotein. Also cleaves the host translation initiation factor EIF4G1, in order to shut down the capped cellular mRNA translation. Inhibits the host nucleus-cytoplasm protein and RNA trafficking by cleaving host members of the nuclear pores including NUP98, NUP62 and NUP153. Counteracts stress granule formation probably by antagonizing its assembly or promoting its dissassembly. Cleaves and inhibits host IFIH1/MDA5, thereby inhibiting the type-I IFN production and the establishment of the antiviral state. Cleaves and inhibits host MAVS, thereby inhibiting the type-I IFN production and the establishment of the antiviral state. Its function is as follows. Plays an essential role in the virus replication cycle by acting as a viroporin. Creates a pore in the host endoplasmic reticulum and as a consequence releases Ca2+ in the cytoplasm of infected cell. In turn, high levels of cytoplasmic calcium may trigger membrane trafficking and transport of viral ER-associated proteins to viroplasms, sites of viral genome replication. Induces and associates with structural rearrangements of intracellular membranes. Displays RNA-binding, nucleotide binding and NTPase activities. May play a role in virion morphogenesis and viral RNA encapsidation by interacting with the capsid protein VP3. Functionally, localizes the viral replication complex to the surface of membranous vesicles. Together with protein 3CD binds the Cis-Active RNA Element (CRE) which is involved in RNA synthesis initiation. Acts as a cofactor to stimulate the activity of 3D polymerase, maybe through a nucleid acid chaperone activity. In terms of biological role, localizes the viral replication complex to the surface of membranous vesicles. It inhibits host cell endoplasmic reticulum-to-Golgi apparatus transport and causes the disassembly of the Golgi complex, possibly through GBF1 interaction. This would result in depletion of MHC, trail receptors and IFN receptors at the host cell surface. Plays an essential role in viral RNA replication by recruiting ACBD3 and PI4KB at the viral replication sites, thereby allowing the formation of the rearranged membranous structures where viral replication takes place. Its function is as follows. Acts as a primer for viral RNA replication and remains covalently bound to viral genomic RNA. VPg is uridylylated prior to priming replication into VPg-pUpU. The oriI viral genomic sequence may act as a template for this. The VPg-pUpU is then used as primer on the genomic RNA poly(A) by the RNA-dependent RNA polymerase to replicate the viral genome. During genome replication, the VPg-RNA linkage is removed by the host TDP2, thereby accelerating replication. During the late stage of the replication cycle, host TDP2 is excluded from sites of viral RNA synthesis and encapsidation, allowing for the generation of progeny virions. Involved in the viral replication complex and viral polypeptide maturation. It exhibits protease activity with a specificity and catalytic efficiency that is different from protease 3C. Protein 3CD lacks polymerase activity. Protein 3CD binds to the 5'UTR of the viral genome. Functionally, major viral protease that mediates proteolytic processing of the polyprotein. Cleaves host EIF5B, contributing to host translation shutoff. Also cleaves host PABPC1, contributing to host translation shutoff. Cleaves host RIGI and thus contributes to the inhibition of type I interferon production. Cleaves host NLRP1, triggers host N-glycine-mediated degradation of the autoinhibitory NLRP1 N-terminal fragment. Inhibits the integrated stress response (ISR) in the infected cell by cleaving host G3BP1. Stress granule formation is thus inhibited, which allows protein synthesis and viral replication. In terms of biological role, replicates the viral genomic RNA on the surface of intracellular membranes. May form linear arrays of subunits that propagate along a strong head-to-tail interaction called interface-I. Covalently attaches UMP to a tyrosine of VPg, which is used to prime RNA synthesis. The positive stranded RNA genome is first replicated at virus induced membranous vesicles, creating a dsRNA genomic replication form. This dsRNA is then used as template to synthesize positive stranded RNA genomes. ss(+)RNA genomes are either translated, replicated or encapsidated. This is Genome polyprotein from Poliovirus type 3 (strains P3/Leon/37 and P3/Leon 12A[1]B).